We begin with the raw amino-acid sequence, 290 residues long: 2-phosphoglycerate kinase (290 aa).

Positions 1–89 (MIIVTDSERK…FWRELRRRKV (89 aa)) constitute an ATP-cone domain.

Belongs to the 2-phosphoglycerate kinase family. It depends on a divalent metal cation as a cofactor.

The catalysed reaction is (2R)-2-phosphoglycerate + ATP = (2R)-2,3-bisphosphoglycerate + ADP + H(+). It functions in the pathway thermoadapter biosynthesis; cyclic 2,3-diphosphoglycerate biosynthesis; cyclic 2,3-diphosphoglycerate from 2-phospho-D-glycerate: step 1/2. In terms of biological role, catalyzes the phosphorylation of 2-phosphoglycerate to 2,3-diphosphoglycerate. Involved in the biosynthesis of cyclic 2,3-bisphosphoglycerate, a thermoprotectant. This Thermococcus kodakarensis (strain ATCC BAA-918 / JCM 12380 / KOD1) (Pyrococcus kodakaraensis (strain KOD1)) protein is 2-phosphoglycerate kinase.